We begin with the raw amino-acid sequence, 202 residues long: NAD(P)H dehydrogenase (quinone) 2 (202 aa).

Residues 4-190 (VLVLYYSSYG…AGAFHQGEIV (187 aa)) form the Flavodoxin-like domain. Residues 10–15 (SSYGHI) and 78–80 (TRF) each bind FMN. Y12 contacts NAD(+). Residue W98 coordinates substrate. Residues 113 to 119 (STGTQHG) and H134 contribute to the FMN site.

This sequence belongs to the WrbA family. The cofactor is FMN.

The catalysed reaction is a quinone + NADH + H(+) = a quinol + NAD(+). The enzyme catalyses a quinone + NADPH + H(+) = a quinol + NADP(+). The polypeptide is NAD(P)H dehydrogenase (quinone) 2 (Rhizobium meliloti (strain 1021) (Ensifer meliloti)).